The following is a 491-amino-acid chain: FAD-dependent monooxygenase cle3 (491 aa).

Glutamate 55, glycine 69, arginine 128, aspartate 330, and alanine 343 together coordinate FAD. The N-linked (GlcNAc...) asparagine glycan is linked to asparagine 380. A helical membrane pass occupies residues 462–482; sequence STVVWTSLGILGLVVFLFLLF.

This sequence belongs to the paxM FAD-dependent monooxygenase family. FAD is required as a cofactor.

Its subcellular location is the membrane. The protein operates within secondary metabolite biosynthesis; terpenoid biosynthesis. FAD-dependent monooxygenase; part of the cluster A that mediates the biosynthesis of chevalone E and its oxidized derivatives that possess a unique five-membered lactone ring and can synergistically enhance the cytotoxicity of doxorubicin (DOX) in breast cancer cells. Within the pathway, cle3 takes part to the biosynthesis of the molecular scaffold by catalyzing the formation of an (S)-epoxide ring at the terminal olefin of the geranylgeranyl group. The molecular scaffold is commonly biosynthesized by a series of enzymes including the non-reducing polyketide synthase (NR-PKS) cle1 that produces the alpha-pyrone triacetic acid lactone (TAL); The membrane-bound prenyltransferase cle5 that accepts TAL as its substrate to perform a C-3 geranylgeranylation reaction, in which the pathway-dedicated GGPS cle6 is required to provide GGPP, the other substrate of cle5; the FAD-dependent monooxygenase Cle3 that forms an (S)-epoxide ring at the terminal olefin of the geranylgeranyl group; and the terpene cyclase Cle7 that catalyzes the cyclization of the prenyl group that yields the pentacyclic pathway intermediate chevalone E. Chevalone E can derivatize into seven new oxidized analogs by the cytochrome P450 monooxygenases cle2 (acting at C-20) and cle4 (acting at C-11 and C-12). This Aspergillus versicolor protein is FAD-dependent monooxygenase cle3.